Consider the following 1024-residue polypeptide: Beta-galactosidase (1024 aa).

Asparagine 103 and aspartate 202 together coordinate substrate. Aspartate 202 is a binding site for Na(+). 3 residues coordinate Mg(2+): glutamate 417, histidine 419, and glutamate 462. Residues glutamate 462 and 538-541 (EYAH) contribute to the substrate site. Glutamate 462 (proton donor) is an active-site residue. Glutamate 538 acts as the Nucleophile in catalysis. Asparagine 598 provides a ligand contact to Mg(2+). Residues phenylalanine 602 and asparagine 605 each contribute to the Na(+) site. Positions 605 and 1000 each coordinate substrate.

It belongs to the glycosyl hydrolase 2 family. In terms of assembly, homotetramer. It depends on Mg(2+) as a cofactor. The cofactor is Mn(2+). Na(+) serves as cofactor.

It carries out the reaction Hydrolysis of terminal non-reducing beta-D-galactose residues in beta-D-galactosides.. Its activity is regulated as follows. Inhibited by phenylethyl thio-beta-D-galactoside (PETG), isopropyl thio-beta-D-galactoside (IPTG), L-ribose, D-galactonolactone, lactose and 2-amino-D-galactose. This Escherichia coli (strain K12) protein is Beta-galactosidase (lacZ).